The sequence spans 425 residues: Glutamate-1-semialdehyde 2,1-aminomutase (425 aa).

An N6-(pyridoxal phosphate)lysine modification is found at Lys-265.

It belongs to the class-III pyridoxal-phosphate-dependent aminotransferase family. HemL subfamily. In terms of assembly, homodimer. Requires pyridoxal 5'-phosphate as cofactor.

Its subcellular location is the cytoplasm. It carries out the reaction (S)-4-amino-5-oxopentanoate = 5-aminolevulinate. It participates in porphyrin-containing compound metabolism; protoporphyrin-IX biosynthesis; 5-aminolevulinate from L-glutamyl-tRNA(Glu): step 2/2. In Clostridium perfringens (strain SM101 / Type A), this protein is Glutamate-1-semialdehyde 2,1-aminomutase.